The following is a 236-amino-acid chain: 2,3,4,5-tetrahydropyridine-2,6-dicarboxylate N-acetyltransferase (236 aa).

It belongs to the transferase hexapeptide repeat family. DapH subfamily.

It catalyses the reaction (S)-2,3,4,5-tetrahydrodipicolinate + acetyl-CoA + H2O = L-2-acetamido-6-oxoheptanedioate + CoA. Its pathway is amino-acid biosynthesis; L-lysine biosynthesis via DAP pathway; LL-2,6-diaminopimelate from (S)-tetrahydrodipicolinate (acetylase route): step 1/3. In terms of biological role, catalyzes the transfer of an acetyl group from acetyl-CoA to tetrahydrodipicolinate. The polypeptide is 2,3,4,5-tetrahydropyridine-2,6-dicarboxylate N-acetyltransferase (Clostridium botulinum (strain ATCC 19397 / Type A)).